The chain runs to 353 residues: Photosystem II D2 protein (353 aa).

Thr2 is subject to N-acetylthreonine. Thr2 bears the Phosphothreonine mark. A helical transmembrane segment spans residues 41-61 (CAYFALGGWFTGTTFVTSWYT). His118 is a chlorophyll a binding site. A helical transmembrane segment spans residues 125-141 (GFMLRQFELARSVQLRP). Pheophytin a-binding residues include Gln130 and Asn143. Residues 153–166 (VFVSVFLIYPLGQS) traverse the membrane as a helical segment. Residue His198 coordinates chlorophyll a. Residues 208-228 (AALLCAIHGATVENTLFEDGD) traverse the membrane as a helical segment. His215 and Phe262 together coordinate a plastoquinone. His215 serves as a coordination point for Fe cation. His269 contributes to the Fe cation binding site. A helical membrane pass occupies residues 279–295 (GSWMSAIGVVGLALNLR).

The protein belongs to the reaction center PufL/M/PsbA/D family. In terms of assembly, PSII is composed of 1 copy each of membrane proteins PsbA, PsbB, PsbC, PsbD, PsbE, PsbF, PsbH, PsbI, PsbJ, PsbK, PsbL, PsbM, PsbT, PsbX, PsbY, PsbZ, Psb30/Ycf12, at least 3 peripheral proteins of the oxygen-evolving complex and a large number of cofactors. It forms dimeric complexes. Requires The D1/D2 heterodimer binds P680, chlorophylls that are the primary electron donor of PSII, and subsequent electron acceptors. It shares a non-heme iron and each subunit binds pheophytin, quinone, additional chlorophylls, carotenoids and lipids. There is also a Cl(-1) ion associated with D1 and D2, which is required for oxygen evolution. The PSII complex binds additional chlorophylls, carotenoids and specific lipids. as cofactor.

The protein resides in the plastid. The protein localises to the chloroplast thylakoid membrane. The enzyme catalyses 2 a plastoquinone + 4 hnu + 2 H2O = 2 a plastoquinol + O2. In terms of biological role, photosystem II (PSII) is a light-driven water:plastoquinone oxidoreductase that uses light energy to abstract electrons from H(2)O, generating O(2) and a proton gradient subsequently used for ATP formation. It consists of a core antenna complex that captures photons, and an electron transfer chain that converts photonic excitation into a charge separation. The D1/D2 (PsbA/PsbD) reaction center heterodimer binds P680, the primary electron donor of PSII as well as several subsequent electron acceptors. D2 is needed for assembly of a stable PSII complex. This is Photosystem II D2 protein from Pinus koraiensis (Korean pine).